Consider the following 398-residue polypeptide: tRNA(Ile)-lysidine synthase (398 aa).

25–30 (SGGVDS) provides a ligand contact to ATP.

Belongs to the tRNA(Ile)-lysidine synthase family.

Its subcellular location is the cytoplasm. The catalysed reaction is cytidine(34) in tRNA(Ile2) + L-lysine + ATP = lysidine(34) in tRNA(Ile2) + AMP + diphosphate + H(+). Its function is as follows. Ligates lysine onto the cytidine present at position 34 of the AUA codon-specific tRNA(Ile) that contains the anticodon CAU, in an ATP-dependent manner. Cytidine is converted to lysidine, thus changing the amino acid specificity of the tRNA from methionine to isoleucine. The protein is tRNA(Ile)-lysidine synthase of Francisella tularensis subsp. tularensis (strain SCHU S4 / Schu 4).